The sequence spans 56 residues: Ribosome biogenesis protein Nop10 (56 aa).

This sequence belongs to the NOP10 family.

Functionally, involved in ribosome biogenesis; more specifically in 18S rRNA pseudouridylation and in cleavage of pre-rRNA. The protein is Ribosome biogenesis protein Nop10 of Methanococcoides burtonii (strain DSM 6242 / NBRC 107633 / OCM 468 / ACE-M).